The following is an 826-amino-acid chain: Lysine-specific histone demethylase 1B (826 aa).

Residues 1–11 are compositionally biased toward basic residues; it reads MAASRGRSKKR. Positions 1–46 are disordered; it reads MAASRGRSKKRSNLELSPDNLPLRSSGRQAKKKAVEIPDEDEDGSS. Phosphoserine occurs at positions 17 and 26. Residues Cys53, Cys58, Cys65, Cys73, His84, His90, Cys92, Cys95, Cys142, Cys147, Cys169, and Cys185 each coordinate Zn(2+). The CW-type zinc finger occupies 133-193; the sequence is DQQLPYWVQC…HCSFPEDLRV (61 aa). Residue Ser253 is modified to Phosphoserine. The segment at 279–298 is GLYR1-binding; sequence YQPNECGKALCVRPDVMELD. The SWIRM domain maps to 281-379; the sequence is PNECGKALCV…TGVLTVAAGQ (99 aa). 389–445 contacts FAD; it reads KSVLVVGAGPAGLAAARQLHNFGMKVTVLEAKDRIGGRVWDDKSFKGVVVGRGPQIV. Histone H3-binding regions lie at residues 444–473, 493–504, and 544–578; these read IVNGCINNPVALMCEQLGISMRKLGERCDL, FNALLDVVSEWR, and FHLSNLEYACGSSLHQVSARSWDHNEFFAQFAGDH. The segment at 570–572 is GLYR1-binding; sequence FFA. FAD contacts are provided by residues Val604, Glu799, and 807-809; that span reads QTV. The interval 802–818 is GLYR1-binding; sequence NRHFPQTVTGAYLSGVR.

The protein belongs to the flavin monoamine oxidase family. As to quaternary structure, interacts with its cofactor GLYR1 at nucleosomes; this interaction stimulates H3K4me1 and H3K4me2 demethylation. In contrast to KDM1A, does not form a complex with RCOR1/CoREST. Possible accessory component of the polycomb repressive deubiquitinase (PR-DUB) complex, at least composed of BAP1, one of ASXL1, ASXL2 or (probably) ASXL3 and one of MBD5 or MBD6. The PR-DUB core associates with a number of accessory proteins, including FOXK1, FOXK2, KDM1B, HCFC1 and OGT; KDM1B specifically associates with ASXL2 PR-DUB complexes. The cofactor is FAD. Zn(2+) serves as cofactor. As to expression, expressed in growing oocytes and in intestinal gland.

It is found in the nucleus. The protein resides in the chromosome. The catalysed reaction is N(6),N(6)-dimethyl-L-lysyl(4)-[histone H3] + 2 A + 2 H2O = L-lysyl(4)-[histone H3] + 2 formaldehyde + 2 AH2. It carries out the reaction N(6)-methyl-L-lysyl(4)-[histone H3] + A + H2O = L-lysyl(4)-[histone H3] + formaldehyde + AH2. With respect to regulation, inhibited by tranylcypromine, but not by pargyline, deprenyl or rasagiline. Histone H3K4me1 and H3K4me2 demethylase activity is inhibited by DNA, this inhibition is released in complex with GLYR1. Functionally, histone demethylase that demethylates 'Lys-4' of histone H3, a specific tag for epigenetic transcriptional activation, thereby acting as a corepressor. Required for de novo DNA methylation of a subset of imprinted genes during oogenesis. Acts by oxidizing the substrate by FAD to generate the corresponding imine that is subsequently hydrolyzed. Demethylates both mono- and di-methylated 'Lys-4' of histone H3. Has no effect on tri-methylated 'Lys-4', mono-, di- or tri-methylated 'Lys-9', mono-, di- or tri-methylated 'Lys-27', mono-, di- or tri-methylated 'Lys-36' of histone H3, or on mono-, di- or tri-methylated 'Lys-20' of histone H4. Histone demethylase that demethylates 'Lys-4' of histone H3, a specific tag for epigenetic transcriptional activation, thereby acting as a corepressor. Required for de novo DNA methylation of a subset of imprinted genes during oogenesis. Acts by oxidizing the substrate by FAD to generate the corresponding imine that is subsequently hydrolyzed. Demethylates both mono- and di-methylated 'Lys-4' of histone H3. Has no effect on tri-methylated 'Lys-4', mono-, di- or tri-methylated 'Lys-9', mono-, di- or tri-methylated 'Lys-27', mono-, di- or tri-methylated 'Lys-36' of histone H3, or on mono-, di- or tri-methylated 'Lys-20' of histone H4. Alone, it is unable to demethylate H3K4me on nucleosomes and requires the presence of GLYR1 to achieve such activity, they form a multifunctional enzyme complex that modifies transcribed chromatin and facilitates Pol II transcription through nucleosomes. This chain is Lysine-specific histone demethylase 1B, found in Mus musculus (Mouse).